A 101-amino-acid polypeptide reads, in one-letter code: MMTEYVLILSAYLFSIGIYGLITSRNMVRALMCLELILNAVNMNLVTFSDLFDSRQLKGDIFSIFVIAIAAAEAAIGPAIVSSIHRNRKSTRINQSNLLNK.

3 helical membrane-spanning segments follow: residues 2–22 (MTEYVLILSAYLFSIGIYGLI), 32–52 (MCLELILNAVNMNLVTFSDLF), and 61–81 (IFSIFVIAIAAAEAAIGPAIV).

The protein belongs to the complex I subunit 4L family. NDH is composed of at least 16 different subunits, 5 of which are encoded in the nucleus.

It localises to the plastid. Its subcellular location is the chloroplast thylakoid membrane. The catalysed reaction is a plastoquinone + NADH + (n+1) H(+)(in) = a plastoquinol + NAD(+) + n H(+)(out). It catalyses the reaction a plastoquinone + NADPH + (n+1) H(+)(in) = a plastoquinol + NADP(+) + n H(+)(out). In terms of biological role, NDH shuttles electrons from NAD(P)H:plastoquinone, via FMN and iron-sulfur (Fe-S) centers, to quinones in the photosynthetic chain and possibly in a chloroplast respiratory chain. The immediate electron acceptor for the enzyme in this species is believed to be plastoquinone. Couples the redox reaction to proton translocation, and thus conserves the redox energy in a proton gradient. The sequence is that of NAD(P)H-quinone oxidoreductase subunit 4L, chloroplastic from Calycanthus floridus var. glaucus (Eastern sweetshrub).